Consider the following 244-residue polypeptide: MGLELYLDLLSQPSRAVYIFAKKNGIPFQTRTVDILKGQHMSEQFSQVNCLNKVPVLKDGSFVLTESTAILIYLSSKYQVADHWYPADLQARAQVHEYLGWHADNIRGTFGVLLWTKVLGPLIGVQVPQEKVERNRDRMVLVLQQLEDKFLRDRAFLVGQQVTLADLMSLEELMQPVALGYNLFEGRPQLTAWRERVEAFLGAELCQEAHSTILSILGQAAKKMLPVPPPEVHASMQLRIARIP.

The region spanning 2 to 82 (GLELYLDLLS…YLSSKYQVAD (81 aa)) is the GST N-terminal domain. Residues 40-41 (HM), 53-54 (KV), 66-67 (ES), and 104-107 (DNIR) contribute to the glutathione site. A GST C-terminal domain is found at 88–230 (DLQARAQVHE…AKKMLPVPPP (143 aa)).

The protein belongs to the GST superfamily. Theta family. In terms of assembly, homodimer. In terms of tissue distribution, in liver, highest expression found in central vein limiting plate hepatocytes. Also expressed in interlobular bile duct epithelial cells. In lung, expressed in club cells and ciliated cells of the bronchiolar epithelium and in type II alveolar cells of the lung parenchyma.

It localises to the cytoplasm. The protein localises to the cytosol. Its subcellular location is the nucleus. It catalyses the reaction RX + glutathione = an S-substituted glutathione + a halide anion + H(+). Conjugation of reduced glutathione to a wide number of exogenous and endogenous hydrophobic electrophiles. In Mus musculus (Mouse), this protein is Glutathione S-transferase theta-2.